Consider the following 386-residue polypeptide: Succinyl-diaminopimelate desuccinylase (386 aa).

Residue His77 participates in Zn(2+) binding. Residue Asp79 is part of the active site. Asp110 is a Zn(2+) binding site. The active-site Proton acceptor is Glu144. Residues Glu145, Glu173, and His359 each coordinate Zn(2+).

Belongs to the peptidase M20A family. DapE subfamily. In terms of assembly, homodimer. Requires Zn(2+) as cofactor. Co(2+) is required as a cofactor.

The catalysed reaction is N-succinyl-(2S,6S)-2,6-diaminopimelate + H2O = (2S,6S)-2,6-diaminopimelate + succinate. It functions in the pathway amino-acid biosynthesis; L-lysine biosynthesis via DAP pathway; LL-2,6-diaminopimelate from (S)-tetrahydrodipicolinate (succinylase route): step 3/3. Functionally, catalyzes the hydrolysis of N-succinyl-L,L-diaminopimelic acid (SDAP), forming succinate and LL-2,6-diaminopimelate (DAP), an intermediate involved in the bacterial biosynthesis of lysine and meso-diaminopimelic acid, an essential component of bacterial cell walls. In Ralstonia pickettii (strain 12J), this protein is Succinyl-diaminopimelate desuccinylase.